The following is a 356-amino-acid chain: Branched-chain-amino-acid transaminase 1 (356 aa).

N6-(pyridoxal phosphate)lysine is present on lysine 197.

Belongs to the class-IV pyridoxal-phosphate-dependent aminotransferase family. Pyridoxal 5'-phosphate is required as a cofactor.

The catalysed reaction is L-leucine + 2-oxoglutarate = 4-methyl-2-oxopentanoate + L-glutamate. The enzyme catalyses L-isoleucine + 2-oxoglutarate = (S)-3-methyl-2-oxopentanoate + L-glutamate. It catalyses the reaction L-valine + 2-oxoglutarate = 3-methyl-2-oxobutanoate + L-glutamate. It functions in the pathway amino-acid biosynthesis; L-isoleucine biosynthesis; L-isoleucine from 2-oxobutanoate: step 4/4. It participates in amino-acid biosynthesis; L-leucine biosynthesis; L-leucine from 3-methyl-2-oxobutanoate: step 4/4. The protein operates within amino-acid biosynthesis; L-valine biosynthesis; L-valine from pyruvate: step 4/4. With respect to regulation, inhibited by canaline. In terms of biological role, transaminates branched-chain amino acids and ketoglutarate. Involved in the final step of the methionine regeneration pathway, where ketomethiobutyrate (KMTB) is converted to methionine via a transamination. The amino donor preference is isoleucine, leucine, valine, phenylalanine, and tyrosine. The sequence is that of Branched-chain-amino-acid transaminase 1 (ilvE) from Bacillus subtilis (strain 168).